We begin with the raw amino-acid sequence, 222 residues long: Transcriptional regulatory protein PmrA (222 aa).

The Response regulatory domain occupies 2 to 116 (KLLIVEDDKL…ELQARVRALI (115 aa)). Position 51 is a 4-aspartylphosphate (aspartate 51). Residues 124-218 (NSKIQVDNIT…LRGFGYLLTK (95 aa)) constitute a DNA-binding region (ompR/PhoB-type).

In terms of processing, phosphorylated by PmrB.

Its subcellular location is the cytoplasm. Its function is as follows. Member of the two-component regulatory system PmrB/PmrA involved in regulation of virulence. Unphosphorylated PmrA represses extracellular enzyme genes. Phosphorylation of PmrA by PmrB relieves such repression, which leads to activation of extracellular enzyme genes. Phosphorylated PmrA seems to repress expression of the pmrCAB operon. This chain is Transcriptional regulatory protein PmrA (pmrA), found in Pectobacterium parmentieri.